A 463-amino-acid chain; its full sequence is Argininosuccinate lyase (463 aa).

Belongs to the lyase 1 family. Argininosuccinate lyase subfamily.

It localises to the cytoplasm. It carries out the reaction 2-(N(omega)-L-arginino)succinate = fumarate + L-arginine. The protein operates within amino-acid biosynthesis; L-arginine biosynthesis; L-arginine from L-ornithine and carbamoyl phosphate: step 3/3. The polypeptide is Argininosuccinate lyase (Dinoroseobacter shibae (strain DSM 16493 / NCIMB 14021 / DFL 12)).